A 293-amino-acid polypeptide reads, in one-letter code: 33 kDa chaperonin (293 aa).

2 cysteine pairs are disulfide-bonded: Cys237–Cys239 and Cys271–Cys274.

Belongs to the HSP33 family. Under oxidizing conditions two disulfide bonds are formed involving the reactive cysteines. Under reducing conditions zinc is bound to the reactive cysteines and the protein is inactive.

The protein localises to the cytoplasm. Functionally, redox regulated molecular chaperone. Protects both thermally unfolding and oxidatively damaged proteins from irreversible aggregation. Plays an important role in the bacterial defense system toward oxidative stress. This Haemophilus influenzae (strain PittEE) protein is 33 kDa chaperonin.